Here is a 332-residue protein sequence, read N- to C-terminus: Eukaryotic translation initiation factor 3 subunit H (332 aa).

The region spanning 18–153 (VQVDGLTVLK…LKAFRLSDEM (136 aa)) is the MPN domain. A disordered region spans residues 251–285 (QQQKENYLQRRQQENQSRIQRGEDPLPDEDLSKMF).

It belongs to the eIF-3 subunit H family. In terms of assembly, component of the eukaryotic translation initiation factor 3 (eIF-3) complex.

The protein localises to the cytoplasm. Functionally, component of the eukaryotic translation initiation factor 3 (eIF-3) complex, which is involved in protein synthesis of a specialized repertoire of mRNAs and, together with other initiation factors, stimulates binding of mRNA and methionyl-tRNAi to the 40S ribosome. The eIF-3 complex specifically targets and initiates translation of a subset of mRNAs involved in cell proliferation. In Nematostella vectensis (Starlet sea anemone), this protein is Eukaryotic translation initiation factor 3 subunit H.